The following is a 267-amino-acid chain: Cell division protein FtsQ (267 aa).

Residues 1–32 (MRQKTISNKNKQTKNTNNISLRRKLGLMYKKA) lie on the Cytoplasmic side of the membrane. A helical membrane pass occupies residues 33–53 (ILVLKIVLMIFVCLFVFTKYF). Topologically, residues 54–267 (TSIKTYLITN…DRNKYYIQKY (214 aa)) are periplasmic. Positions 73–141 (FRLENVIIEG…NTVYIKLFER (69 aa)) constitute a POTRA domain.

Belongs to the FtsQ/DivIB family. FtsQ subfamily.

It localises to the cell inner membrane. Functionally, essential cell division protein. This chain is Cell division protein FtsQ, found in Rickettsia prowazekii (strain Madrid E).